Here is a 498-residue protein sequence, read N- to C-terminus: N-succinylglutamate 5-semialdehyde dehydrogenase 1 (498 aa).

231–236 (GSSNTG) contributes to the NAD(+) binding site. Residues Glu254 and Cys288 contribute to the active site.

The protein belongs to the aldehyde dehydrogenase family. AstD subfamily.

The enzyme catalyses N-succinyl-L-glutamate 5-semialdehyde + NAD(+) + H2O = N-succinyl-L-glutamate + NADH + 2 H(+). Its pathway is amino-acid degradation; L-arginine degradation via AST pathway; L-glutamate and succinate from L-arginine: step 4/5. Catalyzes the NAD-dependent reduction of succinylglutamate semialdehyde into succinylglutamate. The polypeptide is N-succinylglutamate 5-semialdehyde dehydrogenase 1 (Shewanella denitrificans (strain OS217 / ATCC BAA-1090 / DSM 15013)).